The primary structure comprises 159 residues: Adult-specific rigid cuticular protein 15.7 (159 aa).

One can recognise a Chitin-binding type R&amp;R domain in the interval 23 to 89; it reads LGNYAFNYGI…SIKTNEPGTA (67 aa).

In terms of biological role, component of the rigid cuticle of the spider. This Araneus diadematus (European garden spider) protein is Adult-specific rigid cuticular protein 15.7.